The following is a 29-amino-acid chain: Beta-theraphotoxin-Gr1b (29 aa).

Intrachain disulfides connect cysteine 2-cysteine 16, cysteine 9-cysteine 21, and cysteine 15-cysteine 25. At leucine 29 the chain carries Leucine amide.

It belongs to the neurotoxin 30 (phrixotoxin) family. Expressed by the venom gland.

It is found in the secreted. In terms of biological role, inhibits the voltage-gated sodium channels Nav1.1/SCN1A (IC(50)=360 nM), Nav1.2/SCN2A (IC(50)=600 nM), Nav1.3/SCN3A (IC(50)=1280), Nav1.4/SCN4A (IC(50)=330 nM), Nav1.6/SCN8A (IC(50)=1200 nM), Nav1.7/SCN9A (IC(50)=1-40 nM), and voltage-gated potassium channels Kv11.1/KCNH2 (IC(50)=4.8 uM). Induces analgesia in mammals. This analgesia is mediated by a non-opioid receptor related mechanism. This Grammostola rosea (Chilean rose tarantula) protein is Beta-theraphotoxin-Gr1b.